A 693-amino-acid chain; its full sequence is Cleavage and polyadenylation specificity factor subunit 3-I (693 aa).

Residues 81–86 carry the HXHXDH motif motif; sequence HFHIDH.

This sequence belongs to the metallo-beta-lactamase superfamily. RNA-metabolizing metallo-beta-lactamase-like family. INTS11 subfamily. In terms of assembly, component of the CPSF complex, at least composed of CPSF160, CPSF100, CPSF73-I, CPSF73-II, CPSF30, FY and FIPS5. Interacts with CLPS3, CPSF100, CPSF160 and FY. In terms of tissue distribution, highly expressed in carpels. Also detected in seedlings, roots, stems, leaves, flowers and siliques.

It is found in the nucleus. In terms of biological role, component of the cleavage and polyadenylation specificity factor (CPSF) complex that play a key role in pre-mRNA 3'-end formation, recognizing the AAUAAA signal sequence and interacting with poly(A) polymerase and other factors to bring about cleavage and poly(A) addition. May function as mRNA 3'-end-processing endonuclease and also be involved in the histone 3'-end pre-mRNA processing. The sequence is that of Cleavage and polyadenylation specificity factor subunit 3-I (CPSF73-I) from Arabidopsis thaliana (Mouse-ear cress).